The primary structure comprises 264 residues: Thymidylate synthase (264 aa).

Residues arginine 21 and 126 to 127 (RR) contribute to the dUMP site. Cysteine 146 serves as the catalytic Nucleophile. DUMP is bound by residues 166–169 (RSAD), asparagine 177, and 207–209 (HLY). A (6R)-5,10-methylene-5,6,7,8-tetrahydrofolate-binding site is contributed by aspartate 169. Alanine 263 lines the (6R)-5,10-methylene-5,6,7,8-tetrahydrofolate pocket.

The protein belongs to the thymidylate synthase family. Bacterial-type ThyA subfamily. As to quaternary structure, homodimer.

It is found in the cytoplasm. The catalysed reaction is dUMP + (6R)-5,10-methylene-5,6,7,8-tetrahydrofolate = 7,8-dihydrofolate + dTMP. The protein operates within pyrimidine metabolism; dTTP biosynthesis. In terms of biological role, catalyzes the reductive methylation of 2'-deoxyuridine-5'-monophosphate (dUMP) to 2'-deoxythymidine-5'-monophosphate (dTMP) while utilizing 5,10-methylenetetrahydrofolate (mTHF) as the methyl donor and reductant in the reaction, yielding dihydrofolate (DHF) as a by-product. This enzymatic reaction provides an intracellular de novo source of dTMP, an essential precursor for DNA biosynthesis. The protein is Thymidylate synthase of Bradyrhizobium sp. (strain ORS 278).